Reading from the N-terminus, the 159-residue chain is RNA pyrophosphohydrolase (159 aa).

Positions 6–149 constitute a Nudix hydrolase domain; it reads GFRPNVGIIL…KREVYRRALK (144 aa). Residues 38 to 59 carry the Nudix box motif; that stretch reads GGINPDETPEDALYRELNEEVG.

Belongs to the Nudix hydrolase family. RppH subfamily. A divalent metal cation is required as a cofactor.

Its function is as follows. Accelerates the degradation of transcripts by removing pyrophosphate from the 5'-end of triphosphorylated RNA, leading to a more labile monophosphorylated state that can stimulate subsequent ribonuclease cleavage. The sequence is that of RNA pyrophosphohydrolase from Pseudomonas entomophila (strain L48).